The chain runs to 949 residues: Glycine dehydrogenase (decarboxylating) (949 aa).

Lys-697 carries the post-translational modification N6-(pyridoxal phosphate)lysine.

It belongs to the GcvP family. In terms of assembly, the glycine cleavage system is composed of four proteins: P, T, L and H. Pyridoxal 5'-phosphate serves as cofactor.

The catalysed reaction is N(6)-[(R)-lipoyl]-L-lysyl-[glycine-cleavage complex H protein] + glycine + H(+) = N(6)-[(R)-S(8)-aminomethyldihydrolipoyl]-L-lysyl-[glycine-cleavage complex H protein] + CO2. Its function is as follows. The glycine cleavage system catalyzes the degradation of glycine. The P protein binds the alpha-amino group of glycine through its pyridoxal phosphate cofactor; CO(2) is released and the remaining methylamine moiety is then transferred to the lipoamide cofactor of the H protein. The sequence is that of Glycine dehydrogenase (decarboxylating) from Deinococcus radiodurans (strain ATCC 13939 / DSM 20539 / JCM 16871 / CCUG 27074 / LMG 4051 / NBRC 15346 / NCIMB 9279 / VKM B-1422 / R1).